A 56-amino-acid chain; its full sequence is Large ribosomal subunit protein bL33c (56 aa).

Belongs to the bacterial ribosomal protein bL33 family.

It localises to the plastid. It is found in the chloroplast. This chain is Large ribosomal subunit protein bL33c, found in Rhodomonas salina (Cryptomonas salina).